Reading from the N-terminus, the 229-residue chain is Enolase-phosphatase E1 (229 aa).

The Mg(2+) site is built by aspartate 7 and glutamate 9. Substrate-binding positions include serine 122–serine 123 and lysine 161. Residue aspartate 186 coordinates Mg(2+).

It belongs to the HAD-like hydrolase superfamily. MasA/MtnC family. As to quaternary structure, monomer. Mg(2+) is required as a cofactor.

It localises to the cytoplasm. Its subcellular location is the nucleus. It catalyses the reaction 5-methylsulfanyl-2,3-dioxopentyl phosphate + H2O = 1,2-dihydroxy-5-(methylsulfanyl)pent-1-en-3-one + phosphate. It functions in the pathway amino-acid biosynthesis; L-methionine biosynthesis via salvage pathway; L-methionine from S-methyl-5-thio-alpha-D-ribose 1-phosphate: step 3/6. The protein operates within amino-acid biosynthesis; L-methionine biosynthesis via salvage pathway; L-methionine from S-methyl-5-thio-alpha-D-ribose 1-phosphate: step 4/6. Bifunctional enzyme that catalyzes the enolization of 2,3-diketo-5-methylthiopentyl-1-phosphate (DK-MTP-1-P) into the intermediate 2-hydroxy-3-keto-5-methylthiopentenyl-1-phosphate (HK-MTPenyl-1-P), which is then dephosphorylated to form the acireductone 1,2-dihydroxy-3-keto-5-methylthiopentene (DHK-MTPene). In Clavispora lusitaniae (strain ATCC 42720) (Yeast), this protein is Enolase-phosphatase E1.